Here is a 350-residue protein sequence, read N- to C-terminus: Probable peptidyl-alpha-hydroxyglycine alpha-amidating lyase pgal-1 (350 aa).

The signal sequence occupies residues 1–19; the sequence is MRASTACLVALLAPFYISA. The stretch at 46–90 is one NHL 1 repeat; it reads DRELIGLFNPSKEIGQVSGLAVNKNGHIVAFHRSGRVWDEKSFND. N103 carries an N-linked (GlcNAc...) asparagine glycan. NHL repeat units lie at residues 113–154, 162–206, and 212–256; these read KKVI…IDAK, LGEK…FDAK, and QINA…FSAG. Disulfide bonds link C176–C196 and C241–C252.

Belongs to the peptidyl-alpha-hydroxyglycine alpha-amidating lyase family. Requires Zn(2+) as cofactor.

The protein resides in the secreted. It catalyses the reaction a [peptide]-C-terminal (2S)-2-hydroxyglycine = a [peptide]-C-terminal amide + glyoxylate. Probable lyase that catalyzes an essential reaction in C-terminal alpha-amidation of peptides. Mediates the dismutation of the unstable peptidyl(2-hydroxyglycine) intermediate to glyoxylate and the corresponding desglycine peptide amide. C-terminal amidation of peptides such as neuropeptides is essential for full biological activity. This chain is Probable peptidyl-alpha-hydroxyglycine alpha-amidating lyase pgal-1, found in Caenorhabditis elegans.